A 321-amino-acid polypeptide reads, in one-letter code: Aspartate carbamoyltransferase catalytic subunit (321 aa).

Carbamoyl phosphate contacts are provided by arginine 65 and threonine 66. Lysine 93 provides a ligand contact to L-aspartate. Residues arginine 115, histidine 143, and glutamine 146 each contribute to the carbamoyl phosphate site. The L-aspartate site is built by arginine 176 and arginine 230. Residues glycine 271 and proline 272 each contribute to the carbamoyl phosphate site.

This sequence belongs to the aspartate/ornithine carbamoyltransferase superfamily. ATCase family. As to quaternary structure, heterododecamer (2C3:3R2) of six catalytic PyrB chains organized as two trimers (C3), and six regulatory PyrI chains organized as three dimers (R2).

It carries out the reaction carbamoyl phosphate + L-aspartate = N-carbamoyl-L-aspartate + phosphate + H(+). Its pathway is pyrimidine metabolism; UMP biosynthesis via de novo pathway; (S)-dihydroorotate from bicarbonate: step 2/3. Catalyzes the condensation of carbamoyl phosphate and aspartate to form carbamoyl aspartate and inorganic phosphate, the committed step in the de novo pyrimidine nucleotide biosynthesis pathway. In Bartonella quintana (strain Toulouse) (Rochalimaea quintana), this protein is Aspartate carbamoyltransferase catalytic subunit.